We begin with the raw amino-acid sequence, 376 residues long: Phosphate acyltransferase (376 aa).

The disordered stretch occupies residues 334 to 376; sequence AGSLEQAKRDAGGPGSASQMASPIAGPVSGQPAEPYSAQSSKA.

It belongs to the PlsX family. In terms of assembly, homodimer. Probably interacts with PlsY.

The protein resides in the cytoplasm. It carries out the reaction a fatty acyl-[ACP] + phosphate = an acyl phosphate + holo-[ACP]. It participates in lipid metabolism; phospholipid metabolism. Its function is as follows. Catalyzes the reversible formation of acyl-phosphate (acyl-PO(4)) from acyl-[acyl-carrier-protein] (acyl-ACP). This enzyme utilizes acyl-ACP as fatty acyl donor, but not acyl-CoA. In Paraburkholderia phymatum (strain DSM 17167 / CIP 108236 / LMG 21445 / STM815) (Burkholderia phymatum), this protein is Phosphate acyltransferase.